The sequence spans 511 residues: Cytochrome P450 705A5 (511 aa).

Residues cysteine 12 to phenylalanine 30 form a helical membrane-spanning segment. Residue cysteine 454 coordinates heme.

Belongs to the cytochrome P450 family. Heme is required as a cofactor. Expressed primarily in the root epidermis.

Its subcellular location is the membrane. Functionally, converts thalian-diol to a desaturated thalian-diol. This chain is Cytochrome P450 705A5 (CYP705A5), found in Arabidopsis thaliana (Mouse-ear cress).